Consider the following 305-residue polypeptide: Tyrosine recombinase XerC (305 aa).

The 92-residue stretch at 4–95 (TSIQALINKW…AVKNFYRFLE (92 aa)) folds into the Core-binding (CB) domain. The 183-residue stretch at 116-298 (LLPKALSEDD…SIKHLEAVYT (183 aa)) folds into the Tyr recombinase domain. Catalysis depends on residues Arg-159, Lys-182, His-250, Arg-253, and His-276. Catalysis depends on Tyr-285, which acts as the O-(3'-phospho-DNA)-tyrosine intermediate.

Belongs to the 'phage' integrase family. XerC subfamily. Forms a cyclic heterotetrameric complex composed of two molecules of XerC and two molecules of XerD.

It localises to the cytoplasm. In terms of biological role, site-specific tyrosine recombinase, which acts by catalyzing the cutting and rejoining of the recombining DNA molecules. The XerC-XerD complex is essential to convert dimers of the bacterial chromosome into monomers to permit their segregation at cell division. It also contributes to the segregational stability of plasmids. This is Tyrosine recombinase XerC from Rickettsia conorii (strain ATCC VR-613 / Malish 7).